A 398-amino-acid chain; its full sequence is 8-amino-7-oxononanoate synthase (398 aa).

Arg-23 serves as a coordination point for substrate. 110–111 (GY) contacts pyridoxal 5'-phosphate. His-135 serves as a coordination point for substrate. Ser-181, His-209, and Thr-237 together coordinate pyridoxal 5'-phosphate. The residue at position 240 (Lys-240) is an N6-(pyridoxal phosphate)lysine. Residue Thr-354 participates in substrate binding.

The protein belongs to the class-II pyridoxal-phosphate-dependent aminotransferase family. BioF subfamily. As to quaternary structure, homodimer. Requires pyridoxal 5'-phosphate as cofactor.

The catalysed reaction is 6-carboxyhexanoyl-[ACP] + L-alanine + H(+) = (8S)-8-amino-7-oxononanoate + holo-[ACP] + CO2. Its pathway is cofactor biosynthesis; biotin biosynthesis. In terms of biological role, catalyzes the decarboxylative condensation of pimeloyl-[acyl-carrier protein] and L-alanine to produce 8-amino-7-oxononanoate (AON), [acyl-carrier protein], and carbon dioxide. This Anaeromyxobacter dehalogenans (strain 2CP-1 / ATCC BAA-258) protein is 8-amino-7-oxononanoate synthase.